Here is a 671-residue protein sequence, read N- to C-terminus: Zinc finger protein 750 (671 aa).

The CCHC-type zinc finger occupies 25-51 (YKCFQCPFTCNEKSHLFNHMKYGLCKN). The Zn(2+) site is built by Cys27, Cys30, His43, and Cys49. 3 disordered regions span residues 66–87 (PKVN…SPVP), 366–433 (ETSP…KDFT), and 592–671 (SSPG…PRVS). 2 stretches are compositionally biased toward polar residues: residues 67-78 (KVNSTDQKQPSN) and 402-412 (SPTNFTQNSQG).

It localises to the nucleus. Its function is as follows. Transcription factor involved in epidermis differentiation. The polypeptide is Zinc finger protein 750 (znf750) (Xenopus tropicalis (Western clawed frog)).